The chain runs to 227 residues: Cytochrome c oxidase subunit 2 (227 aa).

Residues 1–14 (MAYPMQLGFQDATS) are Mitochondrial intermembrane-facing. Residues 15–45 (PIMEELLHFHDHTLMIVFLISSLVLYIISLM) form a helical membrane-spanning segment. Over 46-59 (LTTKLTHTSTMDAQ) the chain is Mitochondrial matrix. The chain crosses the membrane as a helical span at residues 60-87 (EVETIWTILPAIILIMIALPSLRILYMM). Over 88–227 (DEINNPSLTV…YFEKWSASML (140 aa)) the chain is Mitochondrial intermembrane. Positions 196, 198, 200, 204, and 207 each coordinate Cu cation. Position 198 (glutamate 198) interacts with Mg(2+). The residue at position 218 (tyrosine 218) is a Phosphotyrosine.

The protein belongs to the cytochrome c oxidase subunit 2 family. Component of the cytochrome c oxidase (complex IV, CIV), a multisubunit enzyme composed of 14 subunits. The complex is composed of a catalytic core of 3 subunits MT-CO1, MT-CO2 and MT-CO3, encoded in the mitochondrial DNA, and 11 supernumerary subunits COX4I, COX5A, COX5B, COX6A, COX6B, COX6C, COX7A, COX7B, COX7C, COX8 and NDUFA4, which are encoded in the nuclear genome. The complex exists as a monomer or a dimer and forms supercomplexes (SCs) in the inner mitochondrial membrane with NADH-ubiquinone oxidoreductase (complex I, CI) and ubiquinol-cytochrome c oxidoreductase (cytochrome b-c1 complex, complex III, CIII), resulting in different assemblies (supercomplex SCI(1)III(2)IV(1) and megacomplex MCI(2)III(2)IV(2)). Found in a complex with TMEM177, COA6, COX18, COX20, SCO1 and SCO2. Interacts with TMEM177 in a COX20-dependent manner. Interacts with COX20. Interacts with COX16. Cu cation serves as cofactor.

The protein localises to the mitochondrion inner membrane. The catalysed reaction is 4 Fe(II)-[cytochrome c] + O2 + 8 H(+)(in) = 4 Fe(III)-[cytochrome c] + 2 H2O + 4 H(+)(out). Its function is as follows. Component of the cytochrome c oxidase, the last enzyme in the mitochondrial electron transport chain which drives oxidative phosphorylation. The respiratory chain contains 3 multisubunit complexes succinate dehydrogenase (complex II, CII), ubiquinol-cytochrome c oxidoreductase (cytochrome b-c1 complex, complex III, CIII) and cytochrome c oxidase (complex IV, CIV), that cooperate to transfer electrons derived from NADH and succinate to molecular oxygen, creating an electrochemical gradient over the inner membrane that drives transmembrane transport and the ATP synthase. Cytochrome c oxidase is the component of the respiratory chain that catalyzes the reduction of oxygen to water. Electrons originating from reduced cytochrome c in the intermembrane space (IMS) are transferred via the dinuclear copper A center (CU(A)) of subunit 2 and heme A of subunit 1 to the active site in subunit 1, a binuclear center (BNC) formed by heme A3 and copper B (CU(B)). The BNC reduces molecular oxygen to 2 water molecules using 4 electrons from cytochrome c in the IMS and 4 protons from the mitochondrial matrix. The sequence is that of Cytochrome c oxidase subunit 2 (MT-CO2) from Ovis aries (Sheep).